Here is a 411-residue protein sequence, read N- to C-terminus: S-inosyl-L-homocysteine hydrolase (411 aa).

The substrate site is built by aspartate 121 and glutamate 146. 147-149 (TTT) provides a ligand contact to NAD(+). Residues lysine 176 and aspartate 180 each contribute to the substrate site. NAD(+)-binding positions include asparagine 181, 210–215 (GYGWCG), glutamate 233, asparagine 268, 289–291 (SGH), and asparagine 335.

The protein belongs to the adenosylhomocysteinase family. The cofactor is NAD(+).

Its subcellular location is the cytoplasm. It carries out the reaction S-inosyl-L-homocysteine + H2O = L-homocysteine + inosine. The protein operates within amino-acid biosynthesis; S-adenosyl-L-methionine biosynthesis. Functionally, catalyzes the hydrolysis of S-inosyl-L-homocysteine (SIH) to L-homocysteine (Hcy) and inosine. Likely functions in a S-adenosyl-L-methionine (SAM) recycling pathway from S-adenosyl-L-homocysteine (SAH) produced from SAM-dependent methylation reactions. Can also catalyze the reverse reaction in vitro, i.e. the synthesis of SIH from Hcy and inosine. The chain is S-inosyl-L-homocysteine hydrolase from Methanosarcina mazei (strain ATCC BAA-159 / DSM 3647 / Goe1 / Go1 / JCM 11833 / OCM 88) (Methanosarcina frisia).